A 166-amino-acid polypeptide reads, in one-letter code: uncharacterized protein (166 aa).

This is an uncharacterized protein from Invertebrate iridescent virus 6 (IIV-6).